A 140-amino-acid polypeptide reads, in one-letter code: Granulocyte-macrophage colony-stimulating factor (140 aa).

Positions 1 to 17 are cleaved as a signal peptide; the sequence is MWLQNLLLLGTVVCSIC. Serine 24 carries O-linked (GalNAc...) serine glycosylation. Threonine 27 carries O-linked (GalNAc...) threonine glycosylation. Asparagine 45, asparagine 55, and asparagine 87 each carry an N-linked (GlcNAc...) asparagine glycan. Disulfide bonds link cysteine 72-cysteine 114 and cysteine 106-cysteine 139.

It belongs to the GM-CSF family. As to quaternary structure, monomer. The signaling GM-CSF receptor complex is a dodecamer of two head-to-head hexamers of two alpha, two beta, and two ligand subunits.

The protein localises to the secreted. Functionally, cytokine that stimulates the growth and differentiation of hematopoietic precursor cells from various lineages, including granulocytes, macrophages, eosinophils and erythrocytes. The polypeptide is Granulocyte-macrophage colony-stimulating factor (CSF2) (Cavia porcellus (Guinea pig)).